A 734-amino-acid chain; its full sequence is Phosphoribosylformylglycinamidine synthase subunit PurL (734 aa).

H46 is an active-site residue. Residues Y49 and K88 each coordinate ATP. Position 90 (E90) interacts with Mg(2+). Substrate is bound by residues 91–94 and R113; that span reads SHNH. The active-site Proton acceptor is H92. D114 is a binding site for Mg(2+). Q237 provides a ligand contact to substrate. D265 contacts Mg(2+). 309–311 provides a ligand contact to substrate; sequence ESQ. Positions 489 and 526 each coordinate ATP. N527 serves as a coordination point for Mg(2+). S529 lines the substrate pocket.

The protein belongs to the FGAMS family. Monomer. Part of the FGAM synthase complex composed of 1 PurL, 1 PurQ and 2 PurS subunits.

The protein resides in the cytoplasm. The enzyme catalyses N(2)-formyl-N(1)-(5-phospho-beta-D-ribosyl)glycinamide + L-glutamine + ATP + H2O = 2-formamido-N(1)-(5-O-phospho-beta-D-ribosyl)acetamidine + L-glutamate + ADP + phosphate + H(+). It functions in the pathway purine metabolism; IMP biosynthesis via de novo pathway; 5-amino-1-(5-phospho-D-ribosyl)imidazole from N(2)-formyl-N(1)-(5-phospho-D-ribosyl)glycinamide: step 1/2. Functionally, part of the phosphoribosylformylglycinamidine synthase complex involved in the purines biosynthetic pathway. Catalyzes the ATP-dependent conversion of formylglycinamide ribonucleotide (FGAR) and glutamine to yield formylglycinamidine ribonucleotide (FGAM) and glutamate. The FGAM synthase complex is composed of three subunits. PurQ produces an ammonia molecule by converting glutamine to glutamate. PurL transfers the ammonia molecule to FGAR to form FGAM in an ATP-dependent manner. PurS interacts with PurQ and PurL and is thought to assist in the transfer of the ammonia molecule from PurQ to PurL. This is Phosphoribosylformylglycinamidine synthase subunit PurL from Gluconobacter oxydans (strain 621H) (Gluconobacter suboxydans).